A 143-amino-acid polypeptide reads, in one-letter code: Small ribosomal subunit protein uS11c (143 aa).

This sequence belongs to the universal ribosomal protein uS11 family. Part of the 30S ribosomal subunit.

Its subcellular location is the plastid. The protein resides in the chloroplast. This chain is Small ribosomal subunit protein uS11c, found in Saccharum officinarum (Sugarcane).